The following is a 184-amino-acid chain: MYKMPFDRAGCLNNVGGFGSCGSNYNRINDAKLLKRELHFTETLLDTINRECASGFNNYGYGGGNCGFNDCGFGGCGPAPCGPGGFGGGFGGGFGGGFGGPFNGGAGVEVEGWGYGPQPFQGGFGGGYFDKDDDKKKKKKDDKKDDPCNPFCKPCYKPVCNNPKEKVCKCKECKRASRKIYEDY.

Residues 130-149 (DKDDDKKKKKKDDKKDDPCN) are disordered.

Its subcellular location is the virion. This is an uncharacterized protein from Acanthamoeba polyphaga (Amoeba).